The chain runs to 124 residues: V-type proton ATPase subunit F 1 (124 aa).

This sequence belongs to the V-ATPase F subunit family. V-ATPase is a heteromultimeric enzyme made up of two complexes: the ATP-hydrolytic V1 complex and the proton translocation V0 complex. The V1 complex consists of three catalytic AB heterodimers that form a heterohexamer, three peripheral stalks each consisting of EG heterodimers, one central rotor including subunits D and F, and the regulatory subunits C and H. The proton translocation complex V0 consists of the proton transport subunit a, a ring of proteolipid subunits c9c'', rotary subunit d, subunits e and f, and the accessory subunits VhaAC45 and ATP6AP2.

In terms of biological role, subunit of the V1 complex of vacuolar(H+)-ATPase (V-ATPase), a multisubunit enzyme composed of a peripheral complex (V1) that hydrolyzes ATP and a membrane integral complex (V0) that translocates protons. V-ATPase is responsible for acidifying and maintaining the pH of intracellular compartments and in some cell types, is targeted to the plasma membrane, where it is responsible for acidifying the extracellular environment. In Drosophila pseudoobscura pseudoobscura (Fruit fly), this protein is V-type proton ATPase subunit F 1 (Vha14).